The following is a 176-amino-acid chain: dCTP deaminase (176 aa).

DCTP contacts are provided by residues Arg99–Arg104 and Asp115. The Proton donor/acceptor role is filled by Glu125. Gln163 serves as a coordination point for dCTP.

The protein belongs to the dCTP deaminase family. Homotrimer.

The catalysed reaction is dCTP + H2O + H(+) = dUTP + NH4(+). Its pathway is pyrimidine metabolism; dUMP biosynthesis; dUMP from dCTP (dUTP route): step 1/2. Its function is as follows. Catalyzes the deamination of dCTP to dUTP. This chain is dCTP deaminase, found in Pyrobaculum calidifontis (strain DSM 21063 / JCM 11548 / VA1).